The sequence spans 163 residues: RxLR effector protein PITG_13625 (163 aa).

A signal peptide spans 1 to 23; that stretch reads MKVSKAIVALAALCMALLAPAAG. The short motif at 37–52 is the RxLR-dEER element; sequence RHLRQESAELATTPEE.

It belongs to the RxLR effector family.

It localises to the secreted. The protein localises to the host cell membrane. In terms of biological role, effector that enhances P.infestans colonization of Nicotiana benthamiana leaves. The sequence is that of RxLR effector protein PITG_13625 from Phytophthora infestans (strain T30-4) (Potato late blight agent).